Here is a 208-residue protein sequence, read N- to C-terminus: Ribosomal RNA large subunit methyltransferase E (208 aa).

Residues glycine 63, tryptophan 65, aspartate 83, aspartate 99, and aspartate 124 each coordinate S-adenosyl-L-methionine. The Proton acceptor role is filled by lysine 164.

The protein belongs to the class I-like SAM-binding methyltransferase superfamily. RNA methyltransferase RlmE family.

The protein resides in the cytoplasm. The enzyme catalyses uridine(2552) in 23S rRNA + S-adenosyl-L-methionine = 2'-O-methyluridine(2552) in 23S rRNA + S-adenosyl-L-homocysteine + H(+). Its function is as follows. Specifically methylates the uridine in position 2552 of 23S rRNA at the 2'-O position of the ribose in the fully assembled 50S ribosomal subunit. The sequence is that of Ribosomal RNA large subunit methyltransferase E from Salmonella choleraesuis (strain SC-B67).